The chain runs to 381 residues: Cytosolic acyl coenzyme A thioester hydrolase (381 aa).

Positions proline 51–lysine 169 constitute a HotDog ACOT-type 1 domain. The active site involves asparagine 67. 2 positions are modified to N6-acetyllysine: lysine 169 and lysine 199. The HotDog ACOT-type 2 domain maps to serine 225–glutamate 339. Residue aspartate 256 is part of the active site. The residue at position 284 (lysine 284) is an N6-acetyllysine. The interval leucine 343–proline 381 is disordered. Basic and acidic residues predominate over residues aspartate 354 to glycine 364.

In terms of assembly, homohexamer. The N-terminus is blocked. Isoform 1 is expressed constitutively in brain and testis. Isoform 2 is induced in liver by treatment with the peroxisome proliferator.

It is found in the cytoplasm. Its subcellular location is the cytosol. The catalysed reaction is hexadecanoyl-CoA + H2O = hexadecanoate + CoA + H(+). The enzyme catalyses dodecanoyl-CoA + H2O = dodecanoate + CoA + H(+). It catalyses the reaction tetradecanoyl-CoA + H2O = tetradecanoate + CoA + H(+). It carries out the reaction decanoyl-CoA + H2O = decanoate + CoA + H(+). The catalysed reaction is octanoyl-CoA + H2O = octanoate + CoA + H(+). The enzyme catalyses octadecanoyl-CoA + H2O = octadecanoate + CoA + H(+). It catalyses the reaction (9Z)-octadecenoyl-CoA + H2O = (9Z)-octadecenoate + CoA + H(+). Its pathway is lipid metabolism; fatty acid metabolism. Catalyzes the hydrolysis of acyl-CoAs into free fatty acids and coenzyme A (CoASH), regulating their respective intracellular levels. Preferentially hydrolyzes palmitoyl-CoA, but has a broad specificity acting on other fatty acyl-CoAs with chain-lengths of C8-C18. May play an important physiological function in brain. This is Cytosolic acyl coenzyme A thioester hydrolase (Acot7) from Rattus norvegicus (Rat).